The primary structure comprises 852 residues: Glutamine--tRNA ligase (852 aa).

The segment at 1 to 42 is disordered; sequence MGAFGWEQDRGAPFSGRSPRILTRMTDAPRPTAGADAPARPP. Residues 1–635 form a glutaminyl-tRNA synthetase region; sequence MGAFGWEQDR…ITLKDTWGKQ (635 aa). The segment covering 28-38 has biased composition (low complexity); sequence APRPTAGADAP. A 'HIGH' region motif is present at residues 74–84; it reads PDPSGYAHLGH. 2 residues coordinate L-glutamine: Asp107 and Tyr252. The short motif at 308–312 is the 'KMSKS' region element; sequence ITSKR. 2 disordered regions span residues 533–562 and 632–681; these read EGENADVEDDSAGPAEHEAEPGAGQETAPV and WGKQ…LTPE. Positions 636–852 are gatB-like; that stretch reads GGGTQQKAEG…LAAALKDALA (217 aa). Residues 664-675 are compositionally biased toward low complexity; it reads SSSPAKAHAPKA.

It in the N-terminal section; belongs to the class-I aminoacyl-tRNA synthetase family. The protein in the C-terminal section; belongs to the GatB/GatE family. As to quaternary structure, monomer.

The protein localises to the cytoplasm. It carries out the reaction tRNA(Gln) + L-glutamine + ATP = L-glutaminyl-tRNA(Gln) + AMP + diphosphate. The protein is Glutamine--tRNA ligase of Deinococcus radiodurans (strain ATCC 13939 / DSM 20539 / JCM 16871 / CCUG 27074 / LMG 4051 / NBRC 15346 / NCIMB 9279 / VKM B-1422 / R1).